Consider the following 975-residue polypeptide: Glycine dehydrogenase (decarboxylating) (975 aa).

N6-(pyridoxal phosphate)lysine is present on lysine 723.

This sequence belongs to the GcvP family. The glycine cleavage system is composed of four proteins: P, T, L and H. The cofactor is pyridoxal 5'-phosphate.

It carries out the reaction N(6)-[(R)-lipoyl]-L-lysyl-[glycine-cleavage complex H protein] + glycine + H(+) = N(6)-[(R)-S(8)-aminomethyldihydrolipoyl]-L-lysyl-[glycine-cleavage complex H protein] + CO2. Functionally, the glycine cleavage system catalyzes the degradation of glycine. The P protein binds the alpha-amino group of glycine through its pyridoxal phosphate cofactor; CO(2) is released and the remaining methylamine moiety is then transferred to the lipoamide cofactor of the H protein. The protein is Glycine dehydrogenase (decarboxylating) of Burkholderia ambifaria (strain ATCC BAA-244 / DSM 16087 / CCUG 44356 / LMG 19182 / AMMD) (Burkholderia cepacia (strain AMMD)).